A 145-amino-acid polypeptide reads, in one-letter code: MRTTPMANASTIERKWLVVDAAGKTLGRLSTEVASILRGKHKPTYTPHVDTGDHVIIINAEKIELTGKKLTDKIYYRHTQHPGGLKSRTALEMRTNYPEKMLELAIKGMLPKGSLGRQMFKKLNVYRGSEHPHEAQKPEVYELRG.

Belongs to the universal ribosomal protein uL13 family. Part of the 50S ribosomal subunit.

Functionally, this protein is one of the early assembly proteins of the 50S ribosomal subunit, although it is not seen to bind rRNA by itself. It is important during the early stages of 50S assembly. The protein is Large ribosomal subunit protein uL13 of Bacillus velezensis (strain DSM 23117 / BGSC 10A6 / LMG 26770 / FZB42) (Bacillus amyloliquefaciens subsp. plantarum).